Reading from the N-terminus, the 411-residue chain is Arginine deiminase (411 aa).

The active-site Amidino-cysteine intermediate is Cys401.

This sequence belongs to the arginine deiminase family.

The protein localises to the cytoplasm. The enzyme catalyses L-arginine + H2O = L-citrulline + NH4(+). The protein operates within amino-acid degradation; L-arginine degradation via ADI pathway; carbamoyl phosphate from L-arginine: step 1/2. The chain is Arginine deiminase from Streptococcus pyogenes serotype M2 (strain MGAS10270).